Consider the following 362-residue polypeptide: G-protein coupled receptor 4 (362 aa).

Residues 1-8 lie on the Extracellular side of the membrane; that stretch reads MGNRTLEG. The N-linked (GlcNAc...) asparagine glycan is linked to Asn3. Residues 9–45 form a helical membrane-spanning segment; that stretch reads CHVDSRMDHLFPPSLYIFVIGVGLPTNCLALWAAYRQ. 2 disulfide bridges follow: Cys9–Cys258 and Cys90–Cys168. Residues 46-49 are Cytoplasmic-facing; that stretch reads VRQR. Residues 50–80 traverse the membrane as a helical segment; sequence NELGVYLMNLSIADLLYICTLPLWVDYFLHH. Topologically, residues 81-85 are extracellular; the sequence is DNWIH. The helical transmembrane segment at 86–121 threads the bilayer; it reads GPGSCKLFGFIFYTNIYISIAFLCCISVDRYLAVAH. Over 122–129 the chain is Cytoplasmic; it reads PLRFARLR. The chain crosses the membrane as a helical span at residues 130 to 156; the sequence is RVKTAVAVSSVVWATELGANSAPLFHD. The Extracellular portion of the chain corresponds to 157–172; that stretch reads ELFRDRYNHTFCFEKF. Residues 157–172 are extracellular loop 2 (ECL2); the sequence is ELFRDRYNHTFCFEKF. Residue Asn164 is glycosylated (N-linked (GlcNAc...) asparagine). A helical membrane pass occupies residues 173–210; it reads PMEGWVAWMNLYRVFVGFLFPWALMLLSYRGILRAVRG. Residues 211–214 lie on the Cytoplasmic side of the membrane; sequence SVST. Residues 215 to 250 traverse the membrane as a helical segment; it reads ERQEKVKIKRLALSLIAIVLVCFAPYHVLLLSRSAV. The Extracellular segment spans residues 251-260; sequence YLRRPRDCGF. The helical transmembrane segment at 261-289 threads the bilayer; sequence EERVFSAYHSSLAFTSLNCVADPILYCLV. The Cytoplasmic portion of the chain corresponds to 290–362; that stretch reads NEGARSDVAK…VQLKMLPPAQ (73 aa).

The protein belongs to the G-protein coupled receptor 1 family.

It localises to the cell membrane. Activated by a network of residues that connects an extracellular-facing cavity to Glu-145, a conserved charged residue buried in the transmembrane core of the receptor. Protonation likely drives conformational changes in extracellular loop 2 (ECL2), which stabilizes movement of transmembrane 3 (TM3) and a series of rearrangements that connect the extracellular-facing cavity to Glu-145, a residue only conserved in proton-sensing G-protein coupled receptors. Functionally, proton-sensing G-protein coupled receptor activated by extracellular pH, which is required to monitor pH changes and generate adaptive reactions. Activated by an optimal pH of 6.8-7.2. Ligand binding causes a conformation change that triggers signaling via guanine nucleotide-binding proteins (G proteins) and modulates the activity of downstream effectors, such as adenylate cyclase. GPR4 is mainly coupled to G(s) G proteins and mediates activation of adenylate cyclase activity. May also couple with G(q) and G(12)/G(13) G proteins. Acts as a key regulator of respiratory sensitivity to CO2/H(+) in brain retrotrapezoid nucleus neurons: acts by mediating detection of protons generated by the formation of carbonic acid in the blood, an important mechanism to impulse to breathe. Also acts as a regulator of acid secretion in the kidney collecting duct by maintaining acid-base homeostasis in the kidney. Acidosis-induced GPR4 activation increases paracellular gap formation and permeability of vascular endothelial cells, possibly through the G(12)/G(13)/Rho GTPase signaling pathway. The protein is G-protein coupled receptor 4 (GPR4) of Bos taurus (Bovine).